A 209-amino-acid polypeptide reads, in one-letter code: Protein TIC 20-v, chloroplastic (209 aa).

Residues 1 to 49 constitute a chloroplast transit peptide; sequence MAIISQFFAPLPSLTGTLTLTGRSFLPLNLDTQFPKPRLSRDRAATLVL. A run of 4 helical transmembrane segments spans residues 63 to 83, 103 to 123, 132 to 152, and 173 to 193; these read IISA…GKFI, AFKS…FVVV, VRFN…PDLL, and TVFL…LFGL.

The protein belongs to the Tic20 family. As to quaternary structure, part of the Tic complex. As to expression, expressed in leaves, siliques and roots.

The protein resides in the plastid. It localises to the chloroplast inner membrane. May be involved in protein precursor import into chloroplasts. Not redundant with TIC20-I, TIC20-II or TIC20-IV. This Arabidopsis thaliana (Mouse-ear cress) protein is Protein TIC 20-v, chloroplastic (TIC20-V).